Here is a 193-residue protein sequence, read N- to C-terminus: dITP/XTP pyrophosphatase (193 aa).

7-12 (SENENK) is a substrate binding site. Aspartate 65 acts as the Proton acceptor in catalysis. A Mg(2+)-binding site is contributed by aspartate 65. Substrate contacts are provided by residues serine 66, 144–147 (FGYD), lysine 167, and 172–173 (HR).

The protein belongs to the HAM1 NTPase family. As to quaternary structure, homodimer. Mg(2+) serves as cofactor.

The catalysed reaction is XTP + H2O = XMP + diphosphate + H(+). It catalyses the reaction dITP + H2O = dIMP + diphosphate + H(+). The enzyme catalyses ITP + H2O = IMP + diphosphate + H(+). In terms of biological role, pyrophosphatase that catalyzes the hydrolysis of nucleoside triphosphates to their monophosphate derivatives, with a high preference for the non-canonical purine nucleotides XTP (xanthosine triphosphate), dITP (deoxyinosine triphosphate) and ITP. Seems to function as a house-cleaning enzyme that removes non-canonical purine nucleotides from the nucleotide pool, thus preventing their incorporation into DNA/RNA and avoiding chromosomal lesions. The sequence is that of dITP/XTP pyrophosphatase from Tropheryma whipplei (strain TW08/27) (Whipple's bacillus).